Consider the following 527-residue polypeptide: MNSSDFKKSFKESTENNSNTYRPSKTLNTYKSLKNGNNIANSLIIQLNNNVNNNLNKEKLIKSNNNKLLNLNNNNKNNNNNNINNNNNLISKNGILNNIIKNENQNKILKGNNKNNSNSKLDVSKKSISKENVNYLVSGSIAGAISRSATAGFERLTIIQQVQGMSQNLSQGYVGCIAAMKEMVKREGFKSIWKGNGANIVKVSPNSGIRFLTYEFCKKHFLDNSSNHPSSSSIENGIDGNGVGCGSGSEMKMTVPQTMFSGAMAGLTSTFFTYPLDVVRIRLSLQGSCSNDYAAHRYNGITHSFFKIHKDEGVKGLYKGLGTSIASIVPWVSISFATYEGFKIICKKMILNYQISSSSLSTTTTTPSSINNNNNNNNKNNNSFIYENELGENGINLTNTSGCSTMASTMPSSLLINSVASDENELKKGVNMICDFVCGALSGAVTMTVCYPLDVLRRRMMIQGIGGNKVLYKNGWDATKKILSNEGLVAFYHGIIPAYFKVVPTVAISFAVYEICKDLGSNKYQQK.

The segment covering 1-14 has biased composition (basic and acidic residues); the sequence is MNSSDFKKSFKEST. The disordered stretch occupies residues 1–29; it reads MNSSDFKKSFKESTENNSNTYRPSKTLNT. Topologically, residues 1–132 are mitochondrial intermembrane; that stretch reads MNSSDFKKSF…VSKKSISKEN (132 aa). Positions 15-29 are enriched in polar residues; the sequence is ENNSNTYRPSKTLNT. Solcar repeat units follow at residues 130-220, 253-345, and 430-519; these read KENV…CKKH, MTVP…FKII, and VNMI…CKDL. Residues 133-153 form a helical membrane-spanning segment; the sequence is VNYLVSGSIAGAISRSATAGF. The Mitochondrial matrix segment spans residues 154 to 187; sequence ERLTIIQQVQGMSQNLSQGYVGCIAAMKEMVKRE. The chain crosses the membrane as a helical span at residues 188–208; the sequence is GFKSIWKGNGANIVKVSPNSG. At 209–258 the chain is on the mitochondrial intermembrane side; it reads IRFLTYEFCKKHFLDNSSNHPSSSSIENGIDGNGVGCGSGSEMKMTVPQT. A helical membrane pass occupies residues 259–279; it reads MFSGAMAGLTSTFFTYPLDVV. At 280 to 324 the chain is on the mitochondrial matrix side; it reads RIRLSLQGSCSNDYAAHRYNGITHSFFKIHKDEGVKGLYKGLGTS. The chain crosses the membrane as a helical span at residues 325–345; it reads IASIVPWVSISFATYEGFKII. At 346–435 the chain is on the mitochondrial intermembrane side; sequence CKKMILNYQI…LKKGVNMICD (90 aa). A helical membrane pass occupies residues 436 to 456; it reads FVCGALSGAVTMTVCYPLDVL. Topologically, residues 457–487 are mitochondrial matrix; the sequence is RRRMMIQGIGGNKVLYKNGWDATKKILSNEG. The chain crosses the membrane as a helical span at residues 488-508; that stretch reads LVAFYHGIIPAYFKVVPTVAI. Topologically, residues 509 to 527 are mitochondrial intermembrane; that stretch reads SFAVYEICKDLGSNKYQQK.

The protein belongs to the mitochondrial carrier (TC 2.A.29) family.

The protein resides in the mitochondrion inner membrane. Mitochondrial solute carriers shuttle metabolites, nucleotides, and cofactors through the mitochondrial inner membrane. In Dictyostelium discoideum (Social amoeba), this protein is Mitochondrial substrate carrier family protein V (mcfV).